We begin with the raw amino-acid sequence, 172 residues long: Mitochondrial import inner membrane translocase subunit Tim17-B (172 aa).

A disulfide bridge connects residues Cys-9 and Cys-78. Helical transmembrane passes span 17–37, 61–77, and 113–133; these read CGGA…IKGF, QIGG…STID, and VGSA…GILL. The interval 146–172 is disordered; sequence PFLEDPSQLPPKDGTPAPGYPSYQQYH.

Belongs to the Tim17/Tim22/Tim23 family. As to quaternary structure, component of the TIM23 complex at least composed of TIMM23, TIMM17 (TIMM17A or TIMM17B) and TIMM50. The complex interacts with the TIMM44 component of the PAM complex and with DNAJC15. In terms of processing, forms one disulfide bond. As to expression, expression is abundant in heart and skeletal muscle, intermediate in brain, and weak in pancreas, placenta, kidney and liver.

The protein localises to the mitochondrion inner membrane. In terms of biological role, essential component of the TIM23 complex, a complex that mediates the translocation of transit peptide-containing proteins across the mitochondrial inner membrane. This is Mitochondrial import inner membrane translocase subunit Tim17-B (TIMM17B) from Homo sapiens (Human).